We begin with the raw amino-acid sequence, 337 residues long: Ornithine carbamoyltransferase, catabolic (337 aa).

Carbamoyl phosphate contacts are provided by residues 58–61, Gln-85, Arg-109, and 135–138; these read STRT and HPTQ. L-ornithine-binding positions include Asn-167, Asp-231, and 235–236; that span reads SM. Carbamoyl phosphate contacts are provided by residues 272 to 273 and Arg-317; that span reads CL.

The protein belongs to the aspartate/ornithine carbamoyltransferase superfamily. OTCase family.

The protein localises to the cytoplasm. The enzyme catalyses carbamoyl phosphate + L-ornithine = L-citrulline + phosphate + H(+). It functions in the pathway amino-acid degradation; L-arginine degradation via ADI pathway; carbamoyl phosphate from L-arginine: step 2/2. Functionally, reversibly catalyzes the transfer of the carbamoyl group from carbamoyl phosphate (CP) to the N(epsilon) atom of ornithine (ORN) to produce L-citrulline. In Latilactobacillus sakei (Lactobacillus sakei), this protein is Ornithine carbamoyltransferase, catabolic (arcB).